Here is a 235-residue protein sequence, read N- to C-terminus: Uracil-DNA glycosylase (235 aa).

Residue aspartate 71 is the Proton acceptor of the active site.

This sequence belongs to the uracil-DNA glycosylase (UDG) superfamily. UNG family.

Its subcellular location is the cytoplasm. It catalyses the reaction Hydrolyzes single-stranded DNA or mismatched double-stranded DNA and polynucleotides, releasing free uracil.. Excises uracil residues from the DNA which can arise as a result of misincorporation of dUMP residues by DNA polymerase or due to deamination of cytosine. This chain is Uracil-DNA glycosylase, found in Helicobacter hepaticus (strain ATCC 51449 / 3B1).